Reading from the N-terminus, the 298-residue chain is NADH-cytochrome b5 reductase 2 (298 aa).

A helical transmembrane segment spans residues 13–33; that stretch reads FLPFAIGAVAVTAGALYLNGW. The FAD-binding FR-type domain maps to 48–152; the sequence is RKWIDLELEK…QGPIPKWQWK (105 aa). 155–190 is an FAD binding site; sequence SFDTITLLGGGTGITPLYQLVHHITQNKEDKTKINL.

The protein belongs to the flavoprotein pyridine nucleotide cytochrome reductase family. FAD serves as cofactor.

It is found in the mitochondrion outer membrane. It catalyses the reaction 2 Fe(III)-[cytochrome b5] + NADH = 2 Fe(II)-[cytochrome b5] + NAD(+) + H(+). In terms of biological role, may mediate the reduction of outer membrane cytochrome b5. The chain is NADH-cytochrome b5 reductase 2 (MCR1) from Candida glabrata (strain ATCC 2001 / BCRC 20586 / JCM 3761 / NBRC 0622 / NRRL Y-65 / CBS 138) (Yeast).